We begin with the raw amino-acid sequence, 369 residues long: Anhydro-N-acetylmuramic acid kinase (369 aa).

Residue 12–19 (GTSLDGVD) coordinates ATP.

The protein belongs to the anhydro-N-acetylmuramic acid kinase family.

It carries out the reaction 1,6-anhydro-N-acetyl-beta-muramate + ATP + H2O = N-acetyl-D-muramate 6-phosphate + ADP + H(+). Its pathway is amino-sugar metabolism; 1,6-anhydro-N-acetylmuramate degradation. It participates in cell wall biogenesis; peptidoglycan recycling. Functionally, catalyzes the specific phosphorylation of 1,6-anhydro-N-acetylmuramic acid (anhMurNAc) with the simultaneous cleavage of the 1,6-anhydro ring, generating MurNAc-6-P. Is required for the utilization of anhMurNAc either imported from the medium or derived from its own cell wall murein, and thus plays a role in cell wall recycling. The sequence is that of Anhydro-N-acetylmuramic acid kinase from Escherichia coli O81 (strain ED1a).